We begin with the raw amino-acid sequence, 527 residues long: TnpB-like protein R854 (527 aa).

The span at 21–36 (GSKTKKKVFVKKKPPA) shows a compositional bias: basic residues. Positions 21–50 (GSKTKKKVFVKKKPPAKKPPDKKPLKKTTK) are disordered. Positions 481, 484, 498, and 501 each coordinate Zn(2+).

This sequence in the central section; belongs to the transposase 2 family. In the C-terminal section; belongs to the transposase 35 family.

The protein is TnpB-like protein R854 of Acanthamoeba polyphaga mimivirus (APMV).